The primary structure comprises 384 residues: MKPQQLATQKFSEHYGYSAAQTVFAPGRVNIIGEHTDYNDGFVMPCAINYGMAVSFSKRDDSVWRVYAIDIDEQDEFDLSRPIEPSEHKWANYVRGVVKYIQEKCPEFKQGADLAMTSDVPMSSGLSSSAALEISIGKTAQVLGDLPLSLAEIALIGQQAENKFVGANCGNMDQLTSALGQKDQVIMIDCRSLEITPTPVPHGYSIAIINSNVKHDLVTGEYNSRRQECEFAAKFFGVKALRDVTPAQFIERAAELQAENELAYKRAKHIISENQRVLEAVEALQAKDMVKLGQLMAGSHDSMRDDFEITIPEIDYLVELAQVAIGKNGGARMTGGGFGGCIVCLVPDEKVEHLRRIIADNYEKQTGIKETFHLCTACDGVHLI.

34 to 37 is a substrate binding site; the sequence is EHTD. Position 123–129 (123–129) interacts with ATP; it reads SSGLSSS. Residues Ser129 and Glu161 each coordinate Mg(2+). The Proton acceptor role is filled by Asp173. Tyr222 lines the substrate pocket.

Belongs to the GHMP kinase family. GalK subfamily.

Its subcellular location is the cytoplasm. It carries out the reaction alpha-D-galactose + ATP = alpha-D-galactose 1-phosphate + ADP + H(+). Its pathway is carbohydrate metabolism; galactose metabolism. Catalyzes the transfer of the gamma-phosphate of ATP to D-galactose to form alpha-D-galactose-1-phosphate (Gal-1-P). The protein is Galactokinase of Actinobacillus pleuropneumoniae serotype 3 (strain JL03).